A 491-amino-acid chain; its full sequence is Delayed-rectifier potassium channel regulatory subunit KCNS3 (491 aa).

Over 1–182 the chain is Cytoplasmic; that stretch reads MVFGEFFHRP…IRMENPAYCL (182 aa). A helical membrane pass occupies residues 183-204; it reads SAKLIAISSLSVVLASIVAMCV. At 205–220 the chain is on the extracellular side; it reads HSMSEFQNEDGEVDDP. The chain crosses the membrane as a helical span at residues 221-243; sequence VLEGVEIACIAWFTGELAIRLVA. The Cytoplasmic segment spans residues 244 to 254; the sequence is APSQKKFWKNP. Residues 255-275 traverse the membrane as a helical segment; sequence LNIIDFVSIIPFYATLAVDTK. Residues 276–285 lie on the Extracellular side of the membrane; sequence EEESEDIENM. Residues 286 to 306 form a helical; Voltage-sensor membrane-spanning segment; it reads GKVVQILRLMRIFRILKLARH. Over 307 to 321 the chain is Cytoplasmic; the sequence is SVGLRSLGATLRHSY. Residues 322-343 form a helical membrane-spanning segment; that stretch reads HEVGLLLLFLSVGISIFSVLIY. Topologically, residues 344 to 357 are extracellular; that stretch reads SVEKDELASSLTSI. An intramembrane region (helical) is located at residues 358–369; the sequence is PICWWWATISMT. Positions 370–375 match the Selectivity filter motif; it reads TVGYGD. An intramembrane segment occupies 370–377; the sequence is TVGYGDTH. The Extracellular segment spans residues 378–384; that stretch reads PVTLAGK. The helical transmembrane segment at 385 to 413 threads the bilayer; the sequence is IIASTCIICGILVVALPITIIFNKFSKYY. The Cytoplasmic portion of the chain corresponds to 414 to 491; sequence QKQKDMDVDQ…TASLENCTAK (78 aa).

The protein belongs to the potassium channel family. S (TC 1.A.1.2) subfamily. Kv9.3/KCNS3 sub-subfamily. Heterotetramer with KCNB1. Does not form homomultimers. Expressed in myocytes. Detected in lung, spleen, brain and heart.

The protein localises to the cell membrane. Functionally, potassium channel regulatory subunit that modulates the delayed rectifier potassium channel activity of KCNB1 by namely slowing down the deactivation and inactivation time constants. While it does not form functional channel on its own, it can form functional heterotetrameric channels with KCNB1. The chain is Delayed-rectifier potassium channel regulatory subunit KCNS3 from Rattus norvegicus (Rat).